A 314-amino-acid polypeptide reads, in one-letter code: uncharacterized protein (314 aa).

This is an uncharacterized protein from Methanocaldococcus jannaschii (strain ATCC 43067 / DSM 2661 / JAL-1 / JCM 10045 / NBRC 100440) (Methanococcus jannaschii).